Here is a 7126-residue protein sequence, read N- to C-terminus: MLSKAGVTTQGARGKYRAELYNEKRSDHVACTVPLCDTEDMASKLTPWFEDGETAFNQVSSILKEKGKILFVPMHMQRAMKFLPGPRVYLVERLTGGMLSKHFLVNQLAYKDHVGAAMMRTTLNVKPLGMFFPYDSSLETGEHTFLLRKNGLGGQLFRERPWDRKETPYVEILDDLEADPTGKYSQNLLKKLIGGDCIPVDQYMCGKNGKPIADYAKIVAKEGLTTLADIEVDVKSRMDSDRFIVLNKKLYRVVWNVTRRNVPYSKQTAFTVVSVIQCDDKESVPEHTFTIGSQILMVSPLKATNNKNFNLKQRLLHTFYGKEAVQQPGYIYHSAYVDCNACGRGTWCTGNAIQGFACDCGANYSANDVDLQSSGLVPKNALFLANCPCANNGACSHNAAQVYSILDGKACVEVGGKSFTLTFGGVVYAYMGCCDGTMYFVPRAKSCVSRIGDAIFTGCTGTWDKVVETANLFLEKAQHSLNFCQQFALTEVVLAILSGTTSTFEELRDLCHNASYEKVRDHLVNHGFVVTIGDYIRDAINIGANGVCNATINAPFIAFTGLGESFKKVAAIPWKICSNLKSALDYYCSNIMFRVFPYDIPCDVNDFVELLLDCGKLTVATSYFVLRYLDEKFDTVLGTVSNACQTALSSFLNACVAASRATAGFISDMFKLFKVLMHKLYVYTSCGYVAVAEHSSKIVQQVLDIMSKAMKLLHTNVSWAGTKLSAIIYEGREALLFNSGTYFCLSTKAKTLQDQMNLVLPGDYNKKTLGILDPVPNADTIDVTANSTVVDVVHGQLEPTNEHGPSMIVGNYVLVSDKLFVRTDDEEFYPLCINGKVVSTLFRLKGGMPSKKVTFGDVNTVEVTAYRSVSITYDIHPVLDALLSSSKLATFTVEKDLLVEDFVDVIKDEVLTLLTPLLRGYDIDGFDVEDFIDVPCYVYNQDGDCAWSSNMTFSINPVEDVEEVEEFIEDDYLSDELPIADDEEAWTRAVEEVMPLDDILVAEIELEEDLPLETALESVEAEVGESISDELCVVETAKAQEPSVESTDSTPSTSTVVSENDLSVKPMSRVAETGDVLEVETAVVGGPVSDVTASVVTNDIVSVEQAQQCGVSSLPIQDEASENQVHQVPDLQCTSETKVEIVQPRQDLRPRRLRKSKVDLSKYKHTVINNSVTLVLGDAIQIASLLPKCVLVNAANRHLKHGGGIAGAINKASGGDVQEESDEYISNSGPLHVGDSVLLKGYGLADAILRVVGPDARNNEDAALLKRCYKTFNKHTIVVTPLISSGIFSVDPKVSFEYLLANVTTTTYVVVNNEDIYNTLATPSKPDGLVYSFEGWRGTVRTAKNYGFTCFICTEYSANVKFLRTKGVDTTKKIQTVDGVSYYLYSARDALTDVIAAANGCPGICAMPFGYVTHGLDLAQSGNYVRQVKVPYVCLLASKEQIPIMNSDVAIQTPETAFINNVTSNGGYHSWHLVSGDLIVKDVCYKKLLHWSGQTICYADNKFYVVKNDVALPFSDLEACRAYLTSRAAQQVNIEVLVTIDGVNFRTVILNDATTFRKQLGATFYKGVDISDALPTVKMGGESLFVADNLSESEEVVLKEYYGTSDVTFLQRYYSLQPLVQQWKFVVHDGVKSLKLSNYNCYINATIMMIDMLHDIKFVVPALQNAYLRYKGGDPYDFLALIMAYGDCTFDNPDDEAKLLHTLLAKAELTVSAKMVWREWCTVCGIRDIEYTGMRACVYAGVNSMEELQSVFNETCVCGSVKHRQLVEHSTPWLLVSGLNEVKVSTSTDPVYRAFNVFQGVETSVGHYVHVRVKDGLFYKYDSGSLTKTSDMKCKMTSVWYPKVRYTADCNVVVYDLDGVTKVEVNPDLSNYYMKDGKYYTSKPTIKYSPATILPGSVYSNSCLVGVDGTPGSDTISKFFNDLLGFDETKPISKKLTYSLLPNEDGDVLLSEFNNYNPVYKKGVMLKGKPILWVNNGVCDSALNKPNRASLRQLYDVAPIVLDNKYTVLQDNTSQLIEPNVPVVEDVSITTRKLIEVKCKGLNKPFVKGNFSFVNDPNGVTVVDTLGLTELRALYVDINTRYIVLRDNNWSSLFKLHTVESGDLQIVANGGSVTRRARVLLGASSLFASFAKITVTATTAACKTAGRSFCKFVVNYGVLQNMFLFLKMLFFLPFNYLWPKKQPTVDVGVSGLRTAGVVTTNIVKQCGTAAYYMLLGKFKRVDWKATLRLFLLLCTTILLLSSIYHLVIFNQVLSSDVMLEDATGILAMYKEVRSYLGIRTLCDGLAVEYRNTSFDVVDFCSNRSVLCQWCLIGQDSLTRYSALQMLQTHITSYVLNIDWIWFALEFFLAYVLYTSSFNVLLLVVTAQYFFAYTSAFVNWRAYNYIVSGLFFLVTHIPLHGLVRVYNFLACLWFLRKFYSHVINGCKDTACLLCYKRNRLTRVEASTIVCGTKRTFYIAANGGTSYCCKHNWNCVECDTAGVGNTFICTEVANDLTTTLRRLIKPTDQSHYYVDSVVVKDAVVELHYNRDGSSCYERYPLCYFTNLEKLKFKEVCKTPTGIPEHNFLIYDTNDRGQENLARSACVYYSQVLCKPMLLVDVNLVTTVGDSREIAIKMLDSFINSFISLFSVSRDKLEKLINTARDCVRRGDDFQTVLKTFTDAARGHAGVESDVETTMVVDALQYAHKNDIQLTTECYNNYVPGYIKPDSINTLDLGCLIDLKAASVNQTSMRNANGACVWNSGDYMKLSDSFKRQIRIACRKCNIPFRLTTSKLRAADNILSVKFSATKIVGGAPSWLLRVRDLTVKGYCILTLFVFTVAVLSWFCLPSYSIATVNFNDDRILTYKVIENGIVRDIAPNDACFANKYGHFSKWFNENHGGVYRNSVDCPITIAVIAGVAGARVANVPATLAWVGRQIVLFVSRVFANTNVCFTPTNEIPYDTFSDSGCVLSSECTLFRDAEGNLNPFCYDPTVLPGASSYADMKPHVRYDMYDSDMYIKFPEVIFESTLRITKTLATQYCRFGSCEESAAGVCISTNGSWALYNQNYSTRPGIYCGDDYFDIVRRLAVSLFQPVTYFQLSTSLAMGLVLCVFLTAAFYYINKVKRALADYTQCAVVAVVAALLNSLCLCFIVANPLLVAPYTAMYYYATFYLTGEPAFIMHISWYVMFGTVVPIWMLASYTVGVMLRHLFWVLAYFSKKHVDVFTDGKLNCSFQDAASNIFVIGKDTYVALRNAITQDSFVRYLSLFNKYKYYSGAMDTASYREACAAHLCKALQTYSETGSDILYQPPNCSVTSSVLQSGLVKMSAPSGAVENCIVQVTCGSMTLNGLWLDNTVWCPRHIMCPADQLTDPNYDALLISKTNHSFIVQKHIGAQANLRVVAHSMVGVLLKLTVDVANPSTPAYTFSTVKPGASFSVLACYNGKPTGVFTVNLRHNSTIKGSFLCGSCGSVGYTENGGVLNFVYMHQMELSNGTHTGSSFDGVMYGAFEDKQTHQLQLTDKYCTINVVAWLYAAVLNGCKWFVKPTRVGIVTYNEWALSNQFTEFVGTQSIDMLAHRTGVSVEQMLAAIQSLHAGFQGKTILGQSTLEDEFTPDDVNMQVMGVVMQSGVKRISYGFMHWLMSTLVLAYVSVMQLTKFTMWTYLFETIPTQMTPLLFGFMACVMFTVKHKHTFLSLFLLPVALCLTYANIVYEPQTLVSSTLIAVANWLTPTSVYMRTTHLDFGLYISLSFVLAIIVRRLYRPSMSNLALALCSGVMWFYTYVIGDHSSPITYLMFITTLTSDYTITVFATVNLAKFISGLVFLYAPHLGFILPEVKLVLLIYLCLGYMCTMYFGVFSLLNLKLRVPLGVYDYSVSTQEFRFLTGNGLHAPRNSWEALILNFKLLGIGGTPCIKVATVQSKLTDLKCTSVVLLTVLQQLHLESNSKAWSYCVKLHNEILAAVDPTEAFERFVCLFATLMSFSANVDLDALANDLFENSSVLQATLTEFSHLATYAELETAQSSYQKALNSGDASPQVLKALQKAVNVAKNAYEKDKAVARKLERMAEQAMTSMYKQARAEDKKAKIVSAMQTMLFGMIKKLDNDVLNGVIANARNGCVPLSIVPLCASNKLRVVIPDISVWNKVVNWPSVSYAGSLWDVTVINNVDNEVVKPTDVVETNESLTWPLVIECSRASSSAVKLQNNEIHPKGLKTMVVTAGIDQVNCSSSAVAYYEPVQGHRMVMGLLSENAHLKWAKVEGKDGFINIELQPPCKFLIAGPKGPEIRYLYFVKNLNNLHRGQLLGHIAATVRLQAGANTEFASNSTVLTLVAFAVDPAKAYLDYVGSGGTPLSNYVKMLAPKTGTGVAISVKPEATADQETYGGASVCLYCRAHIEHPDVSGVCKYKTRFVQIPAHVRDPVGFLLKNVPCNVCQYWVGYGCNCDALRNNTVPQSKDTNFLNRVRGSSVNARLEPCSSGLTTDVVYRAFDICNFKARVAGIGKYYKTNTCRFVQVDDEGHKLDSYFIVKRHTMSNYELEKRCYDLLKDCDAVAIHDFFIFDVDKTKTPHIVRQSLTEYTMMDLVYALRHFDQNNCEVLKSILVKYGCCEQSYFDNKLWFDFVENPSVIGVYHKLGERIRQAMLNTVKMCDHMVKSGLVGVLTLDNQDLNGKWYDFGDFVITQPGAGVAIVDSYYSYLMPVLSMTNCLAAETHKDCDFNKPLIEWLLLEYDYTDYKIGLFNKYFKHWDQTYHPNCVNCGDDRCILHCANFNVLFSMVLPNTSFGPIVRKIFVDGVPFIVSCGYHYKELGLVMNMDVNIHRHRLALKELMMYAADPAMHIASASALWDLRTPCFSVAALTTGLTFQTVRPGNFNKDFYDFVVSRGFFKEGSSVTLKHFFFAQDGHAAITDYSYYAYNLPTMVDIKQMLFCMEVVDKYFDIYDGGCLNASEVIVNNLDKSAGHPFNKFGKARVYYESMSYQEQDELFAVTKRNVLPTITQMNLKYAISAKNRARTVAGVSILSTMTNRQYHQKMLKSMAATRGATCVIGTTKFYGGWDFMLKTLYKDVESPHLMGWDYPKCDRAMPNMCRILASLILARKHSTCCTNSDRFYRLANECAQVLSEYVLCGGGYYVKPGGTSSGDATTAYANSVFNILQATTANVSALMSANGNTIIDREIKDMQFDLYINVYRKVVPDPKFVDKYYAFLNKHFSMMILSDDGVVCYNSDYAAKGYVASIQNFKETLYYQNNVFMSEAKCWVETNLEKGPHEFCSQHTLYIKDGDDGYFLPYPDPSRILSAGCFVDDIVKTDGTVMMERYVSLAIDAYPLTKHDDTEYQNVFWVYLQYIEKLYKDLTGHMLDSYSVMLCGDDSAKFWEEGFYRDLYSSPTTLQAVGSCVVCHSQTSLRCGTCIRRPFLCCKCCYDHVIATTHKMVLSVSPYVCNAPGCDVSDVTKLYLGGMSYYCNDHRPVCSFPLCANGLVFGLYKNMCTGSSSIMEFNRLATCDWSDSGDYTLANTTTEPLKLFAAETLRATEEASKQSYAIATIKEIVGERELILVWEVGKSKPPLNRNYVFTGYHLTKNSKVQLGEYVFERIDYSDAVSYKSSTTYKLAVGDIFVLTSHSVATLSAPTIVNQERYLKITGIYPTITVPEEFANHVVNFQKAGFSKYVTVQGPPGTGKSHFAIGLAIYYPTARIVYTACSHAAVDALCAKAFKYLNIAKCSRIIPAKARVECYDRFKVNDTNAQYLFSTVNALPEISVDILVVDEVSMCTNYDLSIINSRVKAKHIVYVGDPAQLPAPRTLLTRGTLEPENFNSVTRLMCNLGPDIFLSVCYRCPKEIVNTVSALVYNNKLSAKKDASGQCFKILFKGSVTHDASSAINRPQLNFVKTFIAANPNWSKAVFISPYNSQNAVARSMLGLTTQTVDSSQGSEYPYVIFCQTADTAHANNLNRFNVAVTRAQKGILCVMTSQVLFDSLEFAELSLNNYKLQSQIVTGLFKDCSREDVGLPPAYAPTYLSVDAKYKTTDELCVNLNITPNVTYSRVISRMGFKLDATIPGYPKLFITRDEAIRQVRSWIGFDVEGAHASRNACGTNVPLQLGFSTGVNFVVQPVGVVDTEWGSMLTTISARPPPGEQFKHLVPLMNKGATWPIVRRRIVQMLSDTLDKLSDYCTFVCWAHGFELTSASYFCKIGKEQRCCMCSRRASTFSSPLQSYACWSHSSGYDYVYNPFFVDVQQWGYVGNLATNHDRYCGIHAGAHVASSDAIMTRCLAIYDCFIERVDWDVTYPYISHEQKLNSCCRTVERNVVRSAVLSGKFDKIYDIGNPKGIPIISEPVEWHFYDAQPLSNKVKKLFYTDDVAKQFEDGLCLFWNCNVSKYPSNAVVCRFDTRVHSEFNLPGCNGGSLYVNKHAFHTPAYDINAFRDLKPLPFFYYSTTPCEVHGSGNMLEDIDYVPLKSAVCITACNLGGAVCRKHAAEYRDYMEAYNIVSAAGFRLWVYKTFDIYNLWSTFVKVQGLENIAFNVIKQGHFTGVDGELPVAVVNDKIFTKNGTDDVCIFKNETALPTNVAFELYAKRAVRSHPDLNLLRNLEVDVCYNFVLWDYDRNNIYGTTTIGVCKYTDIDVNPNLNMCFDIRDKGSLERFMSMPNGVLISDRKIKNYPCIIGPKHAYFNGAILRNIDAKQPITFYLYKKVNNEFVSFSDTFYTCGRTVNDFTALTPMEEDFLVLDSDVFIKKYSLEDYAFEHVVYGDFSHTTLGGLHLLIGLYKKMRDGHILMEEMLKDRATVHNYFITDSNTASYKAVCSVIDLRLDDFVNIIKEMDLDVVSKVVKVPIDLTMIEFMLWCKDGKVQTFYPRLQATNDWKPGLTMPSLFKVQQMNLEPCLLANYKQSIPMPNGVHMNVAKYMQLCQYLNTCTLAVPANMRVIHFGAGCEKGVAPGTSVLRQWLPLDAVLIDNDLNEFVSDADITIFGDCVTVHVGQQVDLLISDMYDPCTKAVGEVNQTKALFFVYLCNFIKNNLALGGSVAIKITEHSWSADLYKIMGRFAYWTVFCTNANASSSEGFLIGINFLGELKEEIDGNVMHANYIFWRNSTPMNLSTYSLFDLSRFPLKLKGTPVLQLKESQINELVISLLSQGKLLIRDNDTLNVSTDVLVNFRKRL.

In terms of domain architecture, CoV Nsp1 globular spans 25-151 (RSDHVACTVP…EHTFLLRKNG (127 aa)). The region spanning 167-195 (TPYVEILDDLEADPTGKYSQNLLKKLIGG) is the BetaCoV Nsp1 C-terminal domain. A CoV Nsp2 N-terminal domain is found at 197-472 (CIPVDQYMCG…WDKVVETANL (276 aa)). The Zn(2+) site is built by cysteine 339, cysteine 342, cysteine 358, and cysteine 360. Positions 339–360 (CNACGRGTWCTGNAIQGFACDC) are C4. A CoV Nsp2 middle domain is found at 478-712 (QHSLNFCQQF…LDIMSKAMKL (235 aa)). The 134-residue stretch at 714-847 (HTNVSWAGTK…VSTLFRLKGG (134 aa)) folds into the CoV Nsp2 C-terminal domain. The Ubiquitin-like 1 domain maps to 851–960 (KKVTFGDVNT…MTFSINPVED (110 aa)). A disordered region spans residues 1039–1061 (AQEPSVESTDSTPSTSTVVSEND). The span at 1041–1059 (EPSVESTDSTPSTSTVVSE) shows a compositional bias: low complexity. Macro domains lie at 1159-1328 (DLSK…KPDG) and 1329-1453 (LVYS…AIQT). A DPUP domain is found at 1453 to 1526 (TPETAFINNV…LEACRAYLTS (74 aa)). The 56-residue stretch at 1531-1586 (QVNIEVLVTIDGVNFRTVILNDATTFRKQLGATFYKGVDISDALPTVKMGGESLFV) folds into the Ubiquitin-like 2 domain. A Peptidase C16 domain is found at 1600–1871 (EYYGTSDVTF…KVEVNPDLSN (272 aa)). The active-site For PL-PRO activity is cysteine 1641. Positions 1721, 1724, 1756, and 1758 each coordinate Zn(2+). The segment at 1721–1758 (CTVCGIRDIEYTGMRACVYAGVNSMEELQSVFNETCVC) adopts a C4-type zinc-finger fold. Active-site for PL-PRO activity residues include histidine 1807 and aspartate 1822. Positions 1885-2002 (TIKYSPATIL…QLYDVAPIVL (118 aa)) constitute a Nucleic acid-binding domain. The G2M domain maps to 2019–2140 (PNVPVVEDVS…AKITVTATTA (122 aa)). A run of 3 helical transmembrane segments spans residues 2119–2139 (VLLGASSLFASFAKITVTATT), 2152–2172 (FVVNYGVLQNMFLFLKMLFFL), and 2229–2249 (LFLLLCTTILLLSSIYHLVIF). Residues 2119–2402 (VLLGASSLFA…VTHIPLHGLV (284 aa)) are HD1. Residues 2266-2332 (LAMYKEVRSY…LQMLQTHITS (67 aa)) form the 3Ecto domain. 2 cysteine pairs are disulfide-bonded: cysteine 2282/cysteine 2310 and cysteine 2300/cysteine 2307. The next 3 helical transmembrane spans lie at 2333 to 2353 (YVLNIDWIWFALEFFLAYVLY), 2357 to 2377 (FNVLLLVVTAQYFFAYTSAFV), and 2382 to 2402 (YNYIVSGLFFLVTHIPLHGLV). The tract at residues 2416–2506 (KFYSHVINGC…TLRRLIKPTD (91 aa)) is Y1. In terms of domain architecture, CoV Nsp3 Y spans 2416–2789 (KFYSHVINGC…LSVKFSATKI (374 aa)). Histidine 2420, cysteine 2425, cysteine 2430, cysteine 2433, cysteine 2466, histidine 2469, cysteine 2473, and cysteine 2476 together coordinate Zn(2+). The ZF1 stretch occupies residues 2420–2433 (HVINGCKDTACLLC). Residues 2466–2476 (CCKHNWNCVEC) form a ZF2 region. Residues 2507–2605 (QSHYYVDSVV…LVDVNLVTTV (99 aa)) form a Y2 region. Residues 2507-2789 (QSHYYVDSVV…LSVKFSATKI (283 aa)) form a coV-Y region. The interval 2606–2688 (GDSREIAIKM…DALQYAHKND (83 aa)) is Y3. The segment at 2689–2789 (IQLTTECYNN…LSVKFSATKI (101 aa)) is Y4. The next 4 membrane-spanning stretches (helical) occupy residues 2807-2827 (GYCILTLFVFTVAVLSWFCLP), 3079-3099 (STSLAMGLVLCVFLTAAFYYI), 3112-3132 (CAVVAVVAALLNSLCLCFIVA), and 3156-3176 (AFIMHISWYVMFGTVVPIWML). Positions 2807 to 3176 (GYCILTLFVF…FGTVVPIWML (370 aa)) are HD2. Residues 3202 to 3298 (VFTDGKLNCS…NCSVTSSVLQ (97 aa)) enclose the Nsp4C domain. Residues 3299 to 3604 (SGLVKMSAPS…NMQVMGVVMQ (306 aa)) enclose the Peptidase C30 domain. Catalysis depends on for 3CL-PRO activity residues histidine 3339 and cysteine 3446. 7 consecutive transmembrane segments (helical) span residues 3610 to 3630 (ISYGFMHWLMSTLVLAYVSVM), 3644 to 3664 (TIPTQMTPLLFGFMACVMFTV), 3669 to 3689 (TFLSLFLLPVALCLTYANIVY), 3714 to 3734 (RTTHLDFGLYISLSFVLAIIV), 3742 to 3762 (MSNLALALCSGVMWFYTYVIG), 3791 to 3811 (LAKFISGLVFLYAPHLGFILP), and 3815 to 3835 (LVLLIYLCLGYMCTMYFGVFS). The interval 3610–3835 (ISYGFMHWLM…MCTMYFGVFS (226 aa)) is HD3. Residues 3897–3979 (SKLTDLKCTS…DLFENSSVLQ (83 aa)) enclose the RdRp Nsp7 cofactor domain. Positions 3980-4178 (ATLTEFSHLA…RASSSAVKLQ (199 aa)) constitute a RdRp Nsp8 cofactor domain. A Nsp9 ssRNA-binding domain is found at 4179–4288 (NNEIHPKGLK…GHIAATVRLQ (110 aa)). Residues 4289-4427 (AGANTEFASN…DALRNNTVPQ (139 aa)) form the ExoN/MTase coactivator domain. Zn(2+) contacts are provided by cysteine 4362, cysteine 4365, histidine 4371, cysteine 4378, cysteine 4404, cysteine 4407, cysteine 4415, and cysteine 4417. 2 zinc fingers span residues 4362–4378 (CLYCRAHIEHPDVSGVC) and 4404–4417 (CNVCQYWVGYGCNC). Residues 4433–4690 (FLNRVRGSSV…AAETHKDCDF (258 aa)) form the NiRAN domain. Positions 4638 and 4647 each coordinate Mn(2+). One can recognise a Nsp12 Interface domain in the interval 4695-4793 (IEWLLLEYDY…MNMDVNIHRH (99 aa)). Zn(2+) contacts are provided by histidine 4724, cysteine 4730, cysteine 4735, cysteine 4739, and cysteine 4916. The Nsp12 RNA-dependent RNA polymerase domain occupies 4794–5361 (RLALKELMMY…DLYSSPTTLQ (568 aa)). The rdRp Fingers N-ter stretch occupies residues 4796 to 5010 (ALKELMMYAA…HQKMLKSMAA (215 aa)). The segment at 5011-5049 (TRGATCVIGTTKFYGGWDFMLKTLYKDVESPHLMGWDYP) is rdRp Palm N-ter. One can recognise a RdRp catalytic domain in the interval 5041–5203 (PHLMGWDYPK…CYNSDYAAKG (163 aa)). The tract at residues 5050–5108 (KCDRAMPNMCRILASLILARKHSTCCTNSDRFYRLANECAQVLSEYVLCGGGYYVKPGG) is rdRp Fingers C-ter. Histidine 5071, cysteine 5074, and cysteine 5075 together coordinate Zn(2+). The interval 5109-5244 (TSSGDATTAY…EKGPHEFCSQ (136 aa)) is rdRp Palm C-ter. Active-site residues include serine 5188, aspartate 5189, and aspartate 5190. A rdRp Thumb region spans residues 5245-5361 (HTLYIKDGDD…DLYSSPTTLQ (117 aa)). The CV ZBD domain occupies 5362–5474 (AVGSCVVCHS…MEFNRLATCD (113 aa)). Residues cysteine 5366, cysteine 5369, cysteine 5377, cysteine 5380, cysteine 5387, cysteine 5390, histidine 5394, histidine 5400, cysteine 5411, cysteine 5416, cysteine 5433, and histidine 5436 each contribute to the Zn(2+) site. The region spanning 5618–5799 (TVPEEFANHV…MCNLGPDIFL (182 aa)) is the (+)RNA virus helicase ATP-binding domain. 5643–5650 (GPPGTGKS) lines the ATP pocket. In terms of domain architecture, (+)RNA virus helicase C-terminal spans 5800–5974 (SVCYRCPKEI…GLFKDCSRED (175 aa)). One can recognise an ExoN domain in the interval 6031–6246 (LFITRDEAIR…RCLAIYDCFI (216 aa)). Catalysis depends on residues aspartate 6049, glutamate 6051, and glutamate 6150. Zn(2+) is bound by residues cysteine 6166, cysteine 6169, cysteine 6185, histidine 6188, histidine 6216, cysteine 6220, and histidine 6223. Catalysis depends on residues histidine 6227 and aspartate 6232. Cysteine 6238 provides a ligand contact to Zn(2+). Residues 6255–6482 (YPYISHEQKL…NLWSTFVKVQ (228 aa)) enclose the N7-MTase domain. Residue 6290-6296 (DIGNPKG) participates in S-adenosyl-L-methionine binding. The interval 6368-6382 (CNGGSLYVNKHAFHT) is gpppA-binding. Positions 6406, 6428, 6439, and 6442 each coordinate Zn(2+). One can recognise a Nsp15 N-terminal oligomerization domain in the interval 6483–6543 (GLENIAFNVI…NVAFELYAKR (61 aa)). In terms of domain architecture, AV-Nsp11N/CoV-Nsp15M spans 6544-6665 (AVRSHPDLNL…LYKKVNNEFV (122 aa)). The NendoU domain occupies 6682–6821 (TALTPMEEDF…KDGKVQTFYP (140 aa)). Catalysis depends on residues histidine 6712, histidine 6727, lysine 6767, lysine 6870, aspartate 6954, lysine 6994, and glutamate 7027. A Nidovirus-type SAM-dependent 2'-O-MTase domain is found at 6826–7120 (TNDWKPGLTM…TLNVSTDVLV (295 aa)).

This sequence belongs to the coronaviruses polyprotein 1ab family. Interacts with host PHB and PHB2. As to quaternary structure, interacts with papain-like protease nsp3 and non-structural protein 6. In terms of assembly, monomer. Homodimer. Only the homodimer shows catalytic activity. Interacts with nsp8 and nsp12 to form the replication-transcription complex (RTC): nsp12, nsp7, two subunits of nsp8, and up to two subunits of nsp13. As to quaternary structure, interacts with nsp7, nsp13 and nsp12 to form the replication-transcription complex (RTC): nsp12, nsp7, two subunits of nsp8, and up to two subunits of nsp13. In terms of assembly, interacts with nsp12. Interacts with proofreading exoribonuclease nsp14 and 2'-O-methyltransferase nsp16; these interactions enhance nsp14 and nsp16 enzymatic activities. As to quaternary structure, interacts with nsp7 and nsp8 to form the replication-transcription complex (RTC): nsp12, nsp7, two subunits of nsp8, and up to two subunits of nsp13. Interacts with nsp9. In terms of assembly, interacts with nsp8 to form the replication-transcription complex (RTC): nsp12, nsp7, two subunits of nsp8, and up to two subunits of nsp13. Requires Mn(2+) as cofactor. It depends on Mg(2+) as a cofactor. In terms of processing, specific enzymatic cleavages in vivo by its own proteases yield mature proteins. 3CL-PRO and PL-PRO proteinases are autocatalytically processed.

It is found in the host membrane. The protein resides in the host cytoplasm. It localises to the host perinuclear region. Its subcellular location is the host endoplasmic reticulum-Golgi intermediate compartment. It catalyses the reaction ATP + H2O = ADP + phosphate + H(+). It carries out the reaction RNA(n) + a ribonucleoside 5'-triphosphate = RNA(n+1) + diphosphate. The enzyme catalyses Thiol-dependent hydrolysis of ester, thioester, amide, peptide and isopeptide bonds formed by the C-terminal Gly of ubiquitin (a 76-residue protein attached to proteins as an intracellular targeting signal).. The catalysed reaction is a 5'-end (N(7)-methyl 5'-triphosphoguanosine)-ribonucleoside in mRNA + S-adenosyl-L-methionine = a 5'-end (N(7)-methyl 5'-triphosphoguanosine)-(2'-O-methyl-ribonucleoside) in mRNA + S-adenosyl-L-homocysteine + H(+). It catalyses the reaction uridylyl-uridylyl-ribonucleotide-RNA = a 3'-end uridylyl-2',3'-cyclophospho-uridine-RNA + a 5'-end dephospho-ribonucleoside-RNA. It carries out the reaction a 5'-end diphospho-ribonucleoside in mRNA + GTP + H(+) = a 5'-end (5'-triphosphoguanosine)-ribonucleoside in mRNA + diphosphate. The enzyme catalyses a 5'-end (5'-triphosphoguanosine)-ribonucleoside in mRNA + S-adenosyl-L-methionine = a 5'-end (N(7)-methyl 5'-triphosphoguanosine)-ribonucleoside in mRNA + S-adenosyl-L-homocysteine. In terms of biological role, the replicase polyprotein of coronaviruses is a multifunctional protein: it contains the activities necessary for the transcription of negative stranded RNA, leader RNA, subgenomic mRNAs and progeny virion RNA as well as proteinases responsible for the cleavage of the polyprotein into functional products. Functionally, inhibits host translation by interacting with the 40S ribosomal subunit. The nsp1-40S ribosome complex further induces an endonucleolytic cleavage near the 5'UTR of host mRNAs, targeting them for degradation. Viral mRNAs are not susceptible to nsp1-mediated endonucleolytic RNA cleavage thanks to the presence of a 5'-end leader sequence and are therefore protected from degradation. By suppressing host gene expression, nsp1 facilitates efficient viral gene expression in infected cells and evasion from host immune response. May play a role in the modulation of host cell survival signaling pathway by interacting with host PHB and PHB2. Indeed, these two proteins play a role in maintaining the functional integrity of the mitochondria and protecting cells from various stresses. Its function is as follows. Responsible for the cleavages located at the N-terminus of the replicase polyprotein. In addition, PL-PRO possesses a deubiquitinating/deISGylating activity and processes both 'Lys-48'- and 'Lys-63'-linked polyubiquitin chains from cellular substrates. Participates together with nsp4 in the assembly of virally-induced cytoplasmic double-membrane vesicles necessary for viral replication. Antagonizes innate immune induction of type I interferon by blocking the phosphorylation, dimerization and subsequent nuclear translocation of host IRF3. Also prevents host NF-kappa-B signaling. In terms of biological role, participates in the assembly of virally-induced cytoplasmic double-membrane vesicles necessary for viral replication. Functionally, cleaves the C-terminus of replicase polyprotein at 11 sites. Recognizes substrates containing the core sequence [ILMVF]-Q-|-[SGACN]. Also able to bind an ADP-ribose-1''-phosphate (ADRP). Plays a role in the initial induction of autophagosomes from host endoplasmic reticulum. Later, limits the expansion of these phagosomes that are no longer able to deliver viral components to lysosomes. Its function is as follows. Forms a hexadecamer with nsp8 (8 subunits of each) that may participate in viral replication by acting as a primase. Alternatively, may synthesize substantially longer products than oligonucleotide primers. In terms of biological role, forms a hexadecamer with nsp7 (8 subunits of each) that may participate in viral replication by acting as a primase. Alternatively, may synthesize substantially longer products than oligonucleotide primers. Functionally, forms a primer, NSP9-pU, which is utilized by the polymerase for the initiation of RNA chains. Interacts with ribosome signal recognition particle RNA (SRP). Together with NSP8, suppress protein integration into the cell membrane, thereby disrupting host immune defenses. Plays a pivotal role in viral transcription by stimulating both nsp14 3'-5' exoribonuclease and nsp16 2'-O-methyltransferase activities. Therefore plays an essential role in viral mRNAs cap methylation. Its function is as follows. RNA-directed RNA polymerase that catalyzes the transcription of viral genomic and subgenomic RNAs. Acts in complex with nsp7 and nsp8 to transcribe both the minus and positive strands of genomic RNA. The kinase-like NiRAN domain of NSP12 attaches one or more nucleotides to the amino terminus of NSP9, forming a covalent RNA-protein intermediate that serves as transcription/replication primer. Subgenomic RNAs (sgRNAs) are formed by discontinuous transcription: The polymerase has the ability to pause at transcription-regulating sequences (TRS) and jump to the leader TRS, resulting in a major deletion. This creates a series of subgenomic RNAs that are replicated, transcribed and translated. In addition, Nsp12 is a subunit of the viral RNA capping enzyme that catalyzes the RNA guanylyltransferase reaction for genomic and sub-genomic RNAs. Subsequently, the NiRAN domain transfers RNA to GDP, and forms the core cap structure GpppA-RNA. In terms of biological role, multi-functional protein with a zinc-binding domain in N-terminus displaying RNA and DNA duplex-unwinding activities with 5' to 3' polarity. Activity of helicase is dependent on magnesium. Functionally, plays a role in viral RNA synthesis through two distinct activities. The N7-guanine methyltransferase activity plays a role in the formation of the cap structure GpppA-RNA. The proofreading exoribonuclease reduces the sensitivity of the virus to RNA mutagens during replication. This activity acts on both ssRNA and dsRNA in a 3'-5' direction. Plays a role in viral transcription/replication and prevents the simultaneous activation of host cell dsRNA sensors, such as MDA5/IFIH1, OAS, and PKR. Acts by degrading the 5'-polyuridines generated during replication of the poly(A) region of viral genomic and subgenomic RNAs. Catalyzes a two-step reaction in which a 2'3'-cyclic phosphate (2'3'-cP) is first generated by 2'-O transesterification, which is then hydrolyzed to a 3'-phosphate (3'-P). If not degraded, poly(U) RNA would hybridize with poly(A) RNA tails and activate host dsRNA sensors. Its function is as follows. Methyltransferase that mediates mRNA cap 2'-O-ribose methylation to the 5'-cap structure of viral mRNAs. N7-methyl guanosine cap is a prerequisite for binding of nsp16. Therefore plays an essential role in viral mRNAs cap methylation which is essential to evade immune system. The sequence is that of Replicase polyprotein 1ab (rep) from Bat coronavirus 133/2005 (BtCoV).